We begin with the raw amino-acid sequence, 133 residues long: Small ribosomal subunit protein uS8c (133 aa).

2 disordered regions span residues 1–23 and 44–133; these read MGND…GAET and FSGN…HVWR. 2 stretches are compositionally biased toward polar residues: residues 12-23 and 55-66; these read APRNASSRGAET and TNRFPVSTSKYQ. Residues 67-81 are compositionally biased toward basic residues; it reads GRTRKARITTRRRVS. Residues 114 to 133 show a composition bias toward basic and acidic residues; that stretch reads TDREARQKRIGGEAPRHVWR.

This sequence belongs to the universal ribosomal protein uS8 family. As to quaternary structure, part of the 30S ribosomal subunit.

The protein resides in the plastid. The protein localises to the chloroplast. In terms of biological role, one of the primary rRNA binding proteins, it binds directly to 16S rRNA central domain where it helps coordinate assembly of the platform of the 30S subunit. The chain is Small ribosomal subunit protein uS8c (rps8) from Selaginella uncinata (Blue spike-moss).